We begin with the raw amino-acid sequence, 324 residues long: Galactosylgalactosylxylosylprotein 3-beta-glucuronosyltransferase 2 (324 aa).

Residues 1 to 2 are Cytoplasmic-facing; it reads MK. The chain crosses the membrane as a helical; Signal-anchor for type II membrane protein span at residues 3–23; sequence SALCNRFFILLPWILIVIIML. The Lumenal segment spans residues 24 to 324; that stretch reads DVDPRRPAPQ…YHMDTVNIEV (301 aa). Residues 34 to 78 form a disordered region; that stretch reads LTSRPYFSPHTVGCGGSRVPLRRSSPGRDAAEKRNESRPQLQPEP. Residue asparagine 68 is glycosylated (N-linked (GlcNAc...) asparagine). Residue aspartate 188 participates in Mn(2+) binding. The active-site Proton acceptor is glutamate 274. An N-linked (GlcNAc...) asparagine glycan is attached at asparagine 293.

It belongs to the glycosyltransferase 43 family. Homodimer. It depends on Mn(2+) as a cofactor. As to expression, expressed in the cerebral cortex, cerebellum and whole brain.

The protein localises to the golgi apparatus membrane. It catalyses the reaction 3-O-(beta-D-galactosyl-(1-&gt;3)-beta-D-galactosyl-(1-&gt;4)-beta-D-xylosyl)-L-seryl-[protein] + UDP-alpha-D-glucuronate = 3-O-(beta-D-GlcA-(1-&gt;3)-beta-D-Gal-(1-&gt;3)-beta-D-Gal-(1-&gt;4)-beta-D-Xyl)-L-seryl-[protein] + UDP + H(+). Its pathway is protein modification; protein glycosylation. Its function is as follows. Involved in the biosynthesis of L2/HNK-1 carbohydrate epitope on both glycolipids and glycoproteins. Substrates include asialo-orosomucoid (ASOR), paragloboside (lacto-N-neotetraosylceramide), Gal-beta-1,4-GlcNAc-beta-1,3-Gal-beta-1,4-Glc-pyridylamine and Gal-beta-1,3-GlcNAc-beta-1,3-Gal-beta-1,4-Glc-pyridylamine. The chain is Galactosylgalactosylxylosylprotein 3-beta-glucuronosyltransferase 2 (B3gat2) from Rattus norvegicus (Rat).